Consider the following 539-residue polypeptide: Inositol 1,4,5-triphosphate receptor associated 2 (539 aa).

Disordered regions lie at residues 1–21, 69–98, and 147–171; these read MLCV…DVTR, YLTQ…LHMA, and AGEE…ISMP. Residues 1 to 479 lie on the Cytoplasmic side of the membrane; sequence MLCVKGPPEQ…LQASFRRANR (479 aa). Positions 74–92 are enriched in low complexity; the sequence is SSEQTSSSESTVTSSESGS. Threonine 78 bears the Phosphothreonine mark. The stretch at 298-326 forms a coiled coil; that stretch reads MIQHVENLKRMYAKEHAELEDLKQALLQN. Residues 334–353 form a disordered region; the sequence is PDEDDCQIKKRSSSLNSKPS. Residues serine 347, serine 354, and serine 408 each carry the phosphoserine modification. Residues 418 to 449 are disordered; that stretch reads ERSDVKARDAPEPQGEEAVERTRKPSLSERRS. The segment covering 435-449 has biased composition (basic and acidic residues); the sequence is AVERTRKPSLSERRS. The chain crosses the membrane as a helical; Anchor for type IV membrane protein span at residues 480–500; the sequence is ALWLTGLIIILIAALMSFLTG. Topologically, residues 501–539 are lumenal; the sequence is QLFQTAVEAAPTQEGDSWLSLEHILWPFTRLGHDGPPPV.

Belongs to the IRAG2 family. In terms of assembly, interacts (via coiled-coil domain) with ITPR3. Interacts with SUN1 and SUN2. Interacts with microtubules. Interacts with HCN4; regulates HCN4 channel activity. The removal of the C-terminal lumenal domain occurs by proteolytic processing. Spleen and thymus. Expressed at high levels in pre B-cells, mature B-cells and pre T-cells. Expressed at low levels in mature T-cells and plasma B-cells. Expressed in circumvallate (CV), foliate (FL) and fungiform (FF) taste papillae cells of the tongue epithelium.

It localises to the cytoplasm. Its subcellular location is the endoplasmic reticulum membrane. It is found in the nucleus envelope. The protein resides in the cytoskeleton. The protein localises to the microtubule organizing center. It localises to the centrosome. Its subcellular location is the spindle pole. It is found in the chromosome. Functionally, plays a role in the delivery of peptides to major histocompatibility complex (MHC) class I molecules; this occurs in a transporter associated with antigen processing (TAP)-independent manner. May play a role in taste signal transduction via ITPR3. May play a role during fertilization in pronucleus congression and fusion. Plays a role in maintaining nuclear shape, maybe as a component of the LINC complex and through interaction with microtubules. Plays a role in the regulation of cellular excitability by regulating the hyperpolarization-activated cyclic nucleotide-gated HCN4 channel activity. The protein is Inositol 1,4,5-triphosphate receptor associated 2 (Irag2) of Mus musculus (Mouse).